Reading from the N-terminus, the 89-residue chain is Small ribosomal subunit protein uS15 (89 aa).

It belongs to the universal ribosomal protein uS15 family. As to quaternary structure, part of the 30S ribosomal subunit. Forms a bridge to the 50S subunit in the 70S ribosome, contacting the 23S rRNA.

Functionally, one of the primary rRNA binding proteins, it binds directly to 16S rRNA where it helps nucleate assembly of the platform of the 30S subunit by binding and bridging several RNA helices of the 16S rRNA. Its function is as follows. Forms an intersubunit bridge (bridge B4) with the 23S rRNA of the 50S subunit in the ribosome. The polypeptide is Small ribosomal subunit protein uS15 (Buchnera aphidicola subsp. Cinara cedri (strain Cc)).